The primary structure comprises 98 residues: Beta-elicitin cinnamomin (98 aa).

Disulfide bonds link C3/C71, C27/C56, and C51/C95. Residues 33-42 carry the Beak-like motif 1 (ligand binding) motif; that stretch reads YSMLTATALP. The Beak-like motif 2 (ligand binding) motif lies at 72 to 83; the sequence is DLTVPTSGLVLD.

This sequence belongs to the elicitin family.

The protein resides in the secreted. Induces local and distal defense responses (incompatible hypersensitive reaction) in plants from the solanaceae and cruciferae families. Elicits leaf necrosis and causes the accumulation of pathogenesis-related proteins. Might interact with the lipidic molecules of the plasma membrane. Elicitins are able to load, carry, and transfer sterols between membranes. The polypeptide is Beta-elicitin cinnamomin (Phytophthora cinnamomi (Cinnamon fungus)).